An 86-amino-acid polypeptide reads, in one-letter code: Chymotrypsin inhibitor (86 aa).

An N-terminal signal peptide occupies residues 1–22; it reads MKLLFAIVALLALAFLCADISA.

The protein belongs to the protease inhibitor I13 (potato type I serine protease inhibitor) family. As to quaternary structure, monomer. As to expression, expressed in the body wall, coelomocytes and at a lower level in intestine.

Its subcellular location is the secreted. Inhibits L.terrestris digestive chymotrypsin LT_CH 1 and bovine alpha-chymotrypsin. The protein is Chymotrypsin inhibitor of Lumbricus terrestris (Common earthworm).